We begin with the raw amino-acid sequence, 130 residues long: Small ribosomal subunit protein uS11 (130 aa).

This sequence belongs to the universal ribosomal protein uS11 family. In terms of assembly, part of the 30S ribosomal subunit. Interacts with proteins S7 and S18. Binds to IF-3.

In terms of biological role, located on the platform of the 30S subunit, it bridges several disparate RNA helices of the 16S rRNA. Forms part of the Shine-Dalgarno cleft in the 70S ribosome. This Campylobacter lari (strain RM2100 / D67 / ATCC BAA-1060) protein is Small ribosomal subunit protein uS11.